A 494-amino-acid polypeptide reads, in one-letter code: Amidophosphoribosyltransferase (494 aa).

The propeptide occupies 1-10 (MFNYSGLNEE). The active-site Nucleophile is Cys11. The Glutamine amidotransferase type-2 domain maps to 11 to 231 (CGVFGIWNHP…AGEYVVINDK (221 aa)). Ser294, Asp356, and Asp357 together coordinate Mg(2+).

It in the C-terminal section; belongs to the purine/pyrimidine phosphoribosyltransferase family. Requires Mg(2+) as cofactor.

The catalysed reaction is 5-phospho-beta-D-ribosylamine + L-glutamate + diphosphate = 5-phospho-alpha-D-ribose 1-diphosphate + L-glutamine + H2O. The protein operates within purine metabolism; IMP biosynthesis via de novo pathway; N(1)-(5-phospho-D-ribosyl)glycinamide from 5-phospho-alpha-D-ribose 1-diphosphate: step 1/2. Its function is as follows. Catalyzes the formation of phosphoribosylamine from phosphoribosylpyrophosphate (PRPP) and glutamine. This is Amidophosphoribosyltransferase from Staphylococcus aureus (strain Mu50 / ATCC 700699).